Here is a 446-residue protein sequence, read N- to C-terminus: Tetratricopeptide repeat protein 23 (446 aa).

TPR repeat units follow at residues 45 to 78 (LHLC…TKIC), 137 to 170 (LELF…SKEM), 186 to 219 (SRIK…TETT), and 356 to 389 (AETY…ETFL).

In terms of assembly, associated with the EvC complex composed of EFCAB7, IQCE, EVC2 and EVC.

The protein resides in the cell projection. It localises to the cilium. Participates positively in the ciliary Hedgehog (Hh) signaling. This chain is Tetratricopeptide repeat protein 23 (Ttc23), found in Rattus norvegicus (Rat).